The following is a 198-amino-acid chain: NAD(P)H dehydrogenase (quinone) (198 aa).

The Flavodoxin-like domain maps to 4–189; that stretch reads ILVLYYSMYG…SIARYQGEYV (186 aa). FMN contacts are provided by residues 10-15 and 78-80; these read SMYGHI and TRF. Tyr-12 serves as a coordination point for NAD(+). Trp-98 contributes to the substrate binding site. FMN-binding positions include 113–118 and His-133; that span reads STGTGG.

It belongs to the WrbA family. The cofactor is FMN.

The catalysed reaction is a quinone + NADH + H(+) = a quinol + NAD(+). It carries out the reaction a quinone + NADPH + H(+) = a quinol + NADP(+). This chain is NAD(P)H dehydrogenase (quinone), found in Citrobacter koseri (strain ATCC BAA-895 / CDC 4225-83 / SGSC4696).